Consider the following 335-residue polypeptide: Holliday junction branch migration complex subunit RuvB (335 aa).

The interval 1 to 181 is large ATPase domain (RuvB-L); it reads MTRILDNDLI…FGITGHMEYY (181 aa). ATP is bound by residues leucine 20, arginine 21, glycine 62, lysine 65, threonine 66, threonine 67, 128–130, arginine 171, tyrosine 181, and arginine 218; that span reads EDF. Threonine 66 is a Mg(2+) binding site. The small ATPAse domain (RuvB-S) stretch occupies residues 182–252; it reads QTADLTEIVE…ITDKALTMLD (71 aa). Residues 255–335 form a head domain (RuvB-H) region; it reads QEGLDYVDQK…GYPYEKTIKT (81 aa). DNA-binding residues include arginine 291, arginine 310, arginine 312, and arginine 315.

Belongs to the RuvB family. As to quaternary structure, homohexamer. Forms an RuvA(8)-RuvB(12)-Holliday junction (HJ) complex. HJ DNA is sandwiched between 2 RuvA tetramers; dsDNA enters through RuvA and exits via RuvB. An RuvB hexamer assembles on each DNA strand where it exits the tetramer. Each RuvB hexamer is contacted by two RuvA subunits (via domain III) on 2 adjacent RuvB subunits; this complex drives branch migration. In the full resolvosome a probable DNA-RuvA(4)-RuvB(12)-RuvC(2) complex forms which resolves the HJ.

The protein resides in the cytoplasm. It catalyses the reaction ATP + H2O = ADP + phosphate + H(+). Functionally, the RuvA-RuvB-RuvC complex processes Holliday junction (HJ) DNA during genetic recombination and DNA repair, while the RuvA-RuvB complex plays an important role in the rescue of blocked DNA replication forks via replication fork reversal (RFR). RuvA specifically binds to HJ cruciform DNA, conferring on it an open structure. The RuvB hexamer acts as an ATP-dependent pump, pulling dsDNA into and through the RuvAB complex. RuvB forms 2 homohexamers on either side of HJ DNA bound by 1 or 2 RuvA tetramers; 4 subunits per hexamer contact DNA at a time. Coordinated motions by a converter formed by DNA-disengaged RuvB subunits stimulates ATP hydrolysis and nucleotide exchange. Immobilization of the converter enables RuvB to convert the ATP-contained energy into a lever motion, pulling 2 nucleotides of DNA out of the RuvA tetramer per ATP hydrolyzed, thus driving DNA branch migration. The RuvB motors rotate together with the DNA substrate, which together with the progressing nucleotide cycle form the mechanistic basis for DNA recombination by continuous HJ branch migration. Branch migration allows RuvC to scan DNA until it finds its consensus sequence, where it cleaves and resolves cruciform DNA. In Streptococcus equi subsp. equi (strain 4047), this protein is Holliday junction branch migration complex subunit RuvB.